The following is a 388-amino-acid chain: Processive diacylglycerol beta-glucosyltransferase (388 aa).

The protein belongs to the glycosyltransferase 28 family. UgtP subfamily.

The protein localises to the cell membrane. The enzyme catalyses a 1,2-diacyl-3-O-(beta-D-glucopyranosyl)-sn-glycerol + UDP-alpha-D-glucose = a 1,2-diacyl-3-O-(beta-D-Glc-(1-&gt;6)-beta-D-Glc)-sn-glycerol + UDP + H(+). The catalysed reaction is a 1,2-diacyl-3-O-(beta-D-Glc-(1-&gt;6)-beta-D-Glc)-sn-glycerol + UDP-alpha-D-glucose = a 1,2-diacyl-3-O-(beta-D-Glc-(1-&gt;6)-beta-D-Glc-(1-&gt;6)-beta-D-Glc)-sn-glycerol + UDP + H(+). It catalyses the reaction a 1,2-diacyl-sn-glycerol + UDP-alpha-D-glucose = a 1,2-diacyl-3-O-(beta-D-glucopyranosyl)-sn-glycerol + UDP + H(+). The protein operates within glycolipid metabolism; diglucosyl-diacylglycerol biosynthesis. Its function is as follows. Processive glucosyltransferase involved in the biosynthesis of both the bilayer- and non-bilayer-forming membrane glucolipids. Is able to successively transfer up to three glucosyl residues to diacylglycerol (DAG), thereby catalyzing the formation of beta-monoglucosyl-DAG (3-O-(beta-D-glucopyranosyl)-1,2-diacyl-sn-glycerol), beta-diglucosyl-DAG (3-O-(beta-D-glucopyranosyl-beta-(1-&gt;6)-D-glucopyranosyl)-1,2-diacyl-sn-glycerol) and beta-triglucosyl-DAG (3-O-(beta-D-glucopyranosyl-beta-(1-&gt;6)-D-glucopyranosyl-beta-(1-&gt;6)-D-glucopyranosyl)-1,2-diacyl-sn-glycerol). Beta-diglucosyl-DAG is the predominant glycolipid found in Bacillales and is also used as a membrane anchor for lipoteichoic acid (LTA). This chain is Processive diacylglycerol beta-glucosyltransferase, found in Bacillus cereus (strain 03BB102).